The sequence spans 201 residues: Recombination protein RecR (201 aa).

The segment at Cys57–Cys72 adopts a C4-type zinc-finger fold. The region spanning Gly81 to Pro176 is the Toprim domain.

It belongs to the RecR family.

May play a role in DNA repair. It seems to be involved in an RecBC-independent recombinational process of DNA repair. It may act with RecF and RecO. The protein is Recombination protein RecR of Escherichia coli O17:K52:H18 (strain UMN026 / ExPEC).